The sequence spans 209 residues: MTLASQIATQLLDIKAVYLKPEDPFTWASGIKSPIYTDNRVTLSYPKTRDLIENGFVETIRAHFPEVEVIAGTATAGIPHGAIIADKMTLPFVYIRSKPKDHGAGNQIEGRVLKGQKMVIIEDLISTGGSVLDAAAAASREGADVLGVVAIFTYELPKASQNFKEAGIKLITLSNYTELIAVAKLQGYITNDGLHLLKKFKEDQVNWQQ.

5-phospho-alpha-D-ribose 1-diphosphate-binding positions include R96, K100, H102, and 122 to 130 (EDLISTGGS). S126 is an orotate binding site.

This sequence belongs to the purine/pyrimidine phosphoribosyltransferase family. PyrE subfamily. As to quaternary structure, homodimer. The cofactor is Mg(2+).

The catalysed reaction is orotidine 5'-phosphate + diphosphate = orotate + 5-phospho-alpha-D-ribose 1-diphosphate. The protein operates within pyrimidine metabolism; UMP biosynthesis via de novo pathway; UMP from orotate: step 1/2. Functionally, catalyzes the transfer of a ribosyl phosphate group from 5-phosphoribose 1-diphosphate to orotate, leading to the formation of orotidine monophosphate (OMP). This is Orotate phosphoribosyltransferase from Streptococcus pyogenes serotype M12 (strain MGAS2096).